Reading from the N-terminus, the 334-residue chain is Formamidase (334 aa).

The CN hydrolase domain maps to 14-260 (FLVAAIQFPV…WEIVTGEIYP (247 aa)). The Proton acceptor role is filled by Glu-60. Lys-133 (proton donor) is an active-site residue. The active-site Nucleophile is Cys-166.

This sequence belongs to the carbon-nitrogen hydrolase superfamily. Aliphatic amidase family.

The enzyme catalyses formamide + H2O = formate + NH4(+). Its function is as follows. Is an aliphatic amidase with a restricted substrate specificity, as it only hydrolyzes formamide. This Helicobacter pylori (strain P12) protein is Formamidase.